Consider the following 276-residue polypeptide: NAD kinase (276 aa).

The active-site Proton acceptor is the Asp68. NAD(+)-binding positions include 68-69 (DG), Arg73, 138-139 (NE), Lys149, Asp168, 179-184 (TAYSLS), and Gln237.

Belongs to the NAD kinase family. Requires a divalent metal cation as cofactor.

Its subcellular location is the cytoplasm. The enzyme catalyses NAD(+) + ATP = ADP + NADP(+) + H(+). Involved in the regulation of the intracellular balance of NAD and NADP, and is a key enzyme in the biosynthesis of NADP. Catalyzes specifically the phosphorylation on 2'-hydroxyl of the adenosine moiety of NAD to yield NADP. The sequence is that of NAD kinase from Methanopyrus kandleri (strain AV19 / DSM 6324 / JCM 9639 / NBRC 100938).